Reading from the N-terminus, the 257-residue chain is MEKFFITDNTTDNTTDNTTDNTTDNTTDKLTDNNSIDNDKINKNITVDSLTNDLNKLSLKSPSDKSSSGKSSIPNKSLVPNKSLVPSKIFFSKTTFFKIKLDEIMSCHNITISDLNSIKNKIESKNLQIDEINTIIIGKILKKLGLYKYHGHEQYILNIIIGKPVQKMSSQEKNLIMKLFDQVLVTFNLLKKKYNWNNFLHYGYLIYQLCKLLEYNDFLDNIALPNNETIIYVNNQAWKKICSHNNWIYYEISQIKN.

Disordered regions lie at residues 1–35 (MEKF…DNNS) and 58–77 (SLKS…PNKS). Residues 7 to 25 (TDNTTDNTTDNTTDNTTDN) show a composition bias toward low complexity. Residues 26-35 (TTDKLTDNNS) show a composition bias toward basic and acidic residues.

Belongs to the nucleo-cytoplasmic large DNA viruses (NCLDVs) VLTF-3 family.

Its function is as follows. Putative transcription factor. This chain is Putative transcription factor R430, found in Acanthamoeba polyphaga (Amoeba).